Consider the following 211-residue polypeptide: ATP phosphoribosyltransferase (211 aa).

The protein belongs to the ATP phosphoribosyltransferase family. Short subfamily. In terms of assembly, heteromultimer composed of HisG and HisZ subunits.

It localises to the cytoplasm. The enzyme catalyses 1-(5-phospho-beta-D-ribosyl)-ATP + diphosphate = 5-phospho-alpha-D-ribose 1-diphosphate + ATP. It functions in the pathway amino-acid biosynthesis; L-histidine biosynthesis; L-histidine from 5-phospho-alpha-D-ribose 1-diphosphate: step 1/9. Its function is as follows. Catalyzes the condensation of ATP and 5-phosphoribose 1-diphosphate to form N'-(5'-phosphoribosyl)-ATP (PR-ATP). Has a crucial role in the pathway because the rate of histidine biosynthesis seems to be controlled primarily by regulation of HisG enzymatic activity. The sequence is that of ATP phosphoribosyltransferase from Bacillus cereus (strain ATCC 14579 / DSM 31 / CCUG 7414 / JCM 2152 / NBRC 15305 / NCIMB 9373 / NCTC 2599 / NRRL B-3711).